A 344-amino-acid chain; its full sequence is Selenide, water dikinase (344 aa).

Residue cysteine 16 is part of the active site. ATP-binding positions include lysine 19 and 47–49; that span reads SRD. Residue aspartate 50 coordinates Mg(2+). ATP contacts are provided by residues aspartate 67, aspartate 90, and 138–140; that span reads GHS. Aspartate 90 lines the Mg(2+) pocket. Aspartate 226 is a binding site for Mg(2+).

Belongs to the selenophosphate synthase 1 family. Class I subfamily. Homodimer. The cofactor is Mg(2+).

It catalyses the reaction hydrogenselenide + ATP + H2O = selenophosphate + AMP + phosphate + 2 H(+). Synthesizes selenophosphate from selenide and ATP. This is Selenide, water dikinase from Pseudomonas putida (strain ATCC 47054 / DSM 6125 / CFBP 8728 / NCIMB 11950 / KT2440).